The following is a 194-amino-acid chain: GTP cyclohydrolase 1 (194 aa).

Zn(2+) is bound by residues cysteine 83, histidine 86, and cysteine 155.

Belongs to the GTP cyclohydrolase I family. As to quaternary structure, toroid-shaped homodecamer, composed of two pentamers of five dimers.

It catalyses the reaction GTP + H2O = 7,8-dihydroneopterin 3'-triphosphate + formate + H(+). Its pathway is cofactor biosynthesis; 7,8-dihydroneopterin triphosphate biosynthesis; 7,8-dihydroneopterin triphosphate from GTP: step 1/1. This chain is GTP cyclohydrolase 1, found in Streptococcus pyogenes serotype M5 (strain Manfredo).